The chain runs to 33 residues: Putative tumor antigen NA88-A (33 aa).

In terms of tissue distribution, expressed in testis and melanoma cell lines.

In Homo sapiens (Human), this protein is Putative tumor antigen NA88-A (VENTXP1).